A 191-amino-acid chain; its full sequence is UPF0149 protein VC_2476 (191 aa).

This sequence belongs to the UPF0149 family.

The polypeptide is UPF0149 protein VC_2476 (Vibrio cholerae serotype O1 (strain ATCC 39315 / El Tor Inaba N16961)).